Consider the following 395-residue polypeptide: Flap endonuclease 1 (395 aa).

Positions 1-104 (MGIKHLYQII…GELAKRFMRK (104 aa)) are N-domain. Aspartate 34 contacts Mg(2+). Residues arginine 47 and arginine 70 each contribute to the DNA site. Positions 86, 158, 160, 179, and 181 each coordinate Mg(2+). Residues 122–253 (EVEKFSRRTV…NTALKLIRDH (132 aa)) are I-domain. Residue glutamate 158 participates in DNA binding. DNA contacts are provided by glycine 231 and aspartate 233. A Mg(2+)-binding site is contributed by aspartate 233. The interaction with PCNA stretch occupies residues 341–349 (QQSRLEGFF). Residues 360–389 (AVLKRKHEEKLELQKKKKKEDAKAKKEAKS) are compositionally biased toward basic and acidic residues. Residues 360-395 (AVLKRKHEEKLELQKKKKKEDAKAKKEAKSKPRGTT) are disordered.

It belongs to the XPG/RAD2 endonuclease family. FEN1 subfamily. As to quaternary structure, interacts with PCNA. Three molecules of FEN1 bind to one PCNA trimer with each molecule binding to one PCNA monomer. PCNA stimulates the nuclease activity without altering cleavage specificity. The cofactor is Mg(2+). Post-translationally, phosphorylated. Phosphorylation upon DNA damage induces relocalization to the nuclear plasma.

It localises to the nucleus. It is found in the nucleolus. The protein resides in the nucleoplasm. Its subcellular location is the mitochondrion. Its function is as follows. Structure-specific nuclease with 5'-flap endonuclease and 5'-3' exonuclease activities involved in DNA replication and repair. During DNA replication, cleaves the 5'-overhanging flap structure that is generated by displacement synthesis when DNA polymerase encounters the 5'-end of a downstream Okazaki fragment. It enters the flap from the 5'-end and then tracks to cleave the flap base, leaving a nick for ligation. Also involved in the long patch base excision repair (LP-BER) pathway, by cleaving within the apurinic/apyrimidinic (AP) site-terminated flap. Acts as a genome stabilization factor that prevents flaps from equilibrating into structures that lead to duplications and deletions. Also possesses 5'-3' exonuclease activity on nicked or gapped double-stranded DNA, and exhibits RNase H activity. Also involved in replication and repair of rDNA and in repairing mitochondrial DNA. In Ajellomyces capsulatus (strain NAm1 / WU24) (Darling's disease fungus), this protein is Flap endonuclease 1.